The sequence spans 352 residues: MTIAVGRARQERGWFDIVDDWLKRDRFVFIGWSGLLLFPCAYLALGGWLTGTTFVTSWYTHGLASSYLEGCNFLTVAVSTPADSMGHSLLLLWGPEAQGDFTRWCQIGGLWTFVAFHGALGLIGFMLRQFEIARLVGVRPYNAIAFSAPIAVFVSVFLIYPLGQSSWFFAPSFGVAAIFRFLLFFQGFHNWTLNPFHMMGVAGVLGGALLCAIHGATVENTLYKDGEAASTFRAFEPTQAEETYSMVTANRYWSQIFGIAFSNKRWLHFFMLFVPVTGLWMSSIGVVGLALNLRAYDFISQETRAAEDPEFETFYTKNILLNEGIRAWMAPQDQPHERFEFPEEVLPRGNAL.

The helical transmembrane segment at 40 to 60 (CAYLALGGWLTGTTFVTSWYT) threads the bilayer. Residue His-117 coordinates chlorophyll a. A helical membrane pass occupies residues 124-140 (GFMLRQFEIARLVGVRP). The pheophytin a site is built by Gln-129 and Asn-142. Residues 152 to 165 (VFVSVFLIYPLGQS) form a helical membrane-spanning segment. Residue His-197 participates in chlorophyll a binding. Residues 207-227 (GALLCAIHGATVENTLYKDGE) form a helical membrane-spanning segment. Residues His-214 and Phe-261 each contribute to the a plastoquinone site. Fe cation is bound at residue His-214. His-268 lines the Fe cation pocket. Residues 278–294 (GLWMSSIGVVGLALNLR) traverse the membrane as a helical segment.

It belongs to the reaction center PufL/M/PsbA/D family. In terms of assembly, PSII is composed of 1 copy each of membrane proteins PsbA, PsbB, PsbC, PsbD, PsbE, PsbF, PsbH, PsbI, PsbJ, PsbK, PsbL, PsbM, PsbT, PsbX, PsbY, PsbZ, Psb30/Ycf12, peripheral proteins PsbO, CyanoQ (PsbQ), PsbU, PsbV and a large number of cofactors. It forms dimeric complexes. Requires The D1/D2 heterodimer binds P680, chlorophylls that are the primary electron donor of PSII, and subsequent electron acceptors. It shares a non-heme iron and each subunit binds pheophytin, quinone, additional chlorophylls, carotenoids and lipids. There is also a Cl(-1) ion associated with D1 and D2, which is required for oxygen evolution. The PSII complex binds additional chlorophylls, carotenoids and specific lipids. as cofactor.

The protein localises to the cellular thylakoid membrane. It carries out the reaction 2 a plastoquinone + 4 hnu + 2 H2O = 2 a plastoquinol + O2. Photosystem II (PSII) is a light-driven water:plastoquinone oxidoreductase that uses light energy to abstract electrons from H(2)O, generating O(2) and a proton gradient subsequently used for ATP formation. It consists of a core antenna complex that captures photons, and an electron transfer chain that converts photonic excitation into a charge separation. The D1/D2 (PsbA/PsbD) reaction center heterodimer binds P680, the primary electron donor of PSII as well as several subsequent electron acceptors. D2 is needed for assembly of a stable PSII complex. This chain is Photosystem II D2 protein, found in Synechococcus sp. (strain JA-3-3Ab) (Cyanobacteria bacterium Yellowstone A-Prime).